Reading from the N-terminus, the 208-residue chain is Somatotropin-B (208 aa).

A signal peptide spans 1-25 (MVPGSCSSFGLLVILSFQNVPDVGG). H44 provides a ligand contact to Zn(2+). A disulfide bridge links C77 with C181. Zn(2+) is bound at residue E190. The cysteines at positions 198 and 206 are disulfide-linked.

The protein belongs to the somatotropin/prolactin family.

The protein localises to the secreted. Growth hormone plays an important role in growth control. In Xenopus laevis (African clawed frog), this protein is Somatotropin-B (gh-b).